A 66-amino-acid polypeptide reads, in one-letter code: MPKQKTHRASAKRFKRTGSGGLKRFRAYTSHRFHGKTKKQRRHLRKAGMVHAGDFKRIKSMLTGLK.

Positions methionine 1–arginine 16 are enriched in basic residues. The segment at methionine 1–leucine 22 is disordered.

This sequence belongs to the bacterial ribosomal protein bL35 family.

This Streptococcus suis (strain 05ZYH33) protein is Large ribosomal subunit protein bL35.